The sequence spans 483 residues: Serralysin (483 aa).

H184 provides a ligand contact to Zn(2+). E185 is an active-site residue. Residues H188 and H194 each contribute to the Zn(2+) site. Positions 263, 266, 295, 297, 298, 300, 337, and 339 each coordinate Ca(2+). Hemolysin-type calcium-binding repeat units lie at residues 342–359 (IGGS…ENIL) and 360–377 (KGGA…ADQL).

The protein belongs to the peptidase M10B family. It depends on Zn(2+) as a cofactor. Ca(2+) serves as cofactor.

Its subcellular location is the secreted. It carries out the reaction Preferential cleavage of bonds with hydrophobic residues in P1'.. With respect to regulation, inhibited by 8 mM 1,10-phenanthroline and 10 mM EDTA, but not by PMSF. Involved in the inhibition of insect antibacterial peptides. Reduces the antibacterial activity of G.mellonella hemolymph by 50%. Reduces the antibacterial activity of cecropin A by 80% and cecropin B by 75%. The sequence is that of Serralysin from Photorhabdus sp. (strain Az29).